Reading from the N-terminus, the 186-residue chain is Elongation factor P (186 aa).

This sequence belongs to the elongation factor P family.

It is found in the cytoplasm. Its pathway is protein biosynthesis; polypeptide chain elongation. Functionally, involved in peptide bond synthesis. Stimulates efficient translation and peptide-bond synthesis on native or reconstituted 70S ribosomes in vitro. Probably functions indirectly by altering the affinity of the ribosome for aminoacyl-tRNA, thus increasing their reactivity as acceptors for peptidyl transferase. The sequence is that of Elongation factor P from Thiobacillus denitrificans (strain ATCC 25259 / T1).